Consider the following 178-residue polypeptide: Nicotinamide-nucleotide adenylyltransferase (178 aa).

It belongs to the archaeal NMN adenylyltransferase family.

The protein localises to the cytoplasm. It carries out the reaction beta-nicotinamide D-ribonucleotide + ATP + H(+) = diphosphate + NAD(+). The protein operates within cofactor biosynthesis; NAD(+) biosynthesis; NAD(+) from nicotinamide D-ribonucleotide: step 1/1. This Pyrobaculum arsenaticum (strain DSM 13514 / JCM 11321 / PZ6) protein is Nicotinamide-nucleotide adenylyltransferase.